Reading from the N-terminus, the 295-residue chain is Ribosomal RNA small subunit methyltransferase A (295 aa).

6 residues coordinate S-adenosyl-L-methionine: Asn29, Leu31, Gly56, Glu77, Asp102, and Asn127.

Belongs to the class I-like SAM-binding methyltransferase superfamily. rRNA adenine N(6)-methyltransferase family. RsmA subfamily.

The protein localises to the cytoplasm. It catalyses the reaction adenosine(1518)/adenosine(1519) in 16S rRNA + 4 S-adenosyl-L-methionine = N(6)-dimethyladenosine(1518)/N(6)-dimethyladenosine(1519) in 16S rRNA + 4 S-adenosyl-L-homocysteine + 4 H(+). Its function is as follows. Specifically dimethylates two adjacent adenosines (A1518 and A1519) in the loop of a conserved hairpin near the 3'-end of 16S rRNA in the 30S particle. May play a critical role in biogenesis of 30S subunits. The sequence is that of Ribosomal RNA small subunit methyltransferase A from Anoxybacillus flavithermus (strain DSM 21510 / WK1).